Consider the following 135-residue polypeptide: ATP synthase epsilon chain (135 aa).

It belongs to the ATPase epsilon chain family. F-type ATPases have 2 components, CF(1) - the catalytic core - and CF(0) - the membrane proton channel. CF(1) has five subunits: alpha(3), beta(3), gamma(1), delta(1), epsilon(1). CF(0) has three main subunits: a, b and c.

The protein resides in the cell inner membrane. Its function is as follows. Produces ATP from ADP in the presence of a proton gradient across the membrane. The polypeptide is ATP synthase epsilon chain (Rhodopseudomonas palustris (strain ATCC BAA-98 / CGA009)).